Here is a 297-residue protein sequence, read N- to C-terminus: Thiosulfate sulfurtransferase (297 aa).

Lys-14 is subject to N6-acetyllysine; alternate. Lys-14 carries the N6-succinyllysine; alternate modification. The region spanning 25 to 143 is the Rhodanese 1 domain; it reads VGPSLRVLDA…WLKEGHPVTS (119 aa). Ser-35 carries an O-linked (GlcNAc) serine glycan. Ser-38 bears the Phosphoserine mark. Lys-136 is modified (N6-acetyllysine; alternate). N6-succinyllysine; alternate is present on Lys-136. A hinge region spans residues 144–159; the sequence is EPSRPEPAVFKATLNR. Lys-163 is subject to N6-acetyllysine. The Rhodanese 2 domain occupies 173–288; sequence QSKRFQLVDS…WFRRAPPETR (116 aa). At Lys-175 the chain carries N6-acetyllysine; alternate. Lys-175 is subject to N6-succinyllysine; alternate. A substrate-binding site is contributed by Arg-187. Lys-224 is modified (N6-acetyllysine; alternate). Residue Lys-224 is modified to N6-succinyllysine; alternate. The residue at position 236 (Lys-236) is an N6-acetyllysine. Position 237 is an N6-acetyllysine; alternate (Lys-237). The residue at position 237 (Lys-237) is an N6-succinyllysine; alternate. The active-site Cysteine persulfide intermediate is Cys-248. Lys-250 provides a ligand contact to substrate.

In terms of assembly, monomer. As to expression, expressed in numerous tissues.

It localises to the mitochondrion matrix. The enzyme catalyses thiosulfate + hydrogen cyanide = thiocyanate + sulfite + 2 H(+). Together with MRPL18, acts as a mitochondrial import factor for the cytosolic 5S rRNA. Only the nascent unfolded cytoplasmic form is able to bind to the 5S rRNA. Involved in the formation of iron-sulfur complexes, cyanide detoxification or modification of sulfur-containing enzymes. Other thiol compounds, besides cyanide, can act as sulfur ion acceptors. Also has weak mercaptopyruvate sulfurtransferase (MST) activity. This Rattus norvegicus (Rat) protein is Thiosulfate sulfurtransferase (Tst).